The following is a 266-amino-acid chain: Hydroxyethylthiazole kinase (266 aa).

Met43 provides a ligand contact to substrate. The ATP site is built by Arg119 and Thr166. Gly193 serves as a coordination point for substrate.

Belongs to the Thz kinase family. Mg(2+) is required as a cofactor.

The catalysed reaction is 5-(2-hydroxyethyl)-4-methylthiazole + ATP = 4-methyl-5-(2-phosphooxyethyl)-thiazole + ADP + H(+). It functions in the pathway cofactor biosynthesis; thiamine diphosphate biosynthesis; 4-methyl-5-(2-phosphoethyl)-thiazole from 5-(2-hydroxyethyl)-4-methylthiazole: step 1/1. Catalyzes the phosphorylation of the hydroxyl group of 4-methyl-5-beta-hydroxyethylthiazole (THZ). The polypeptide is Hydroxyethylthiazole kinase (Methanococcus maripaludis (strain DSM 14266 / JCM 13030 / NBRC 101832 / S2 / LL)).